Reading from the N-terminus, the 1303-residue chain is Latent-transforming growth factor beta-binding protein 3 (1303 aa).

Residues 1-43 (MPGPRGAAGGLAPEMRGAGAAGLLALLLLLLLLLLGLGGRVEG) form the signal peptide. An N-linked (GlcNAc...) asparagine glycan is attached at asparagine 89. The region spanning 109–141 (RVVVCPLPCMNGGQCSSRNQCLCPPDFTGRFCQ) is the EGF-like 1 domain. 6 cysteine pairs are disulfide-bonded: cysteine 113-cysteine 123, cysteine 117-cysteine 129, cysteine 131-cysteine 140, cysteine 279-cysteine 303, cysteine 289-cysteine 316, and cysteine 304-cysteine 319. Positions 247-282 (SSNAESAAPSQHLLPHPKPSHPRPPTQKPLGRCFQD) are disordered. Positions 277–331 (GRCFQDTLPKQPCGSNPLPGLTKQEDCCGSIGTAWGQSKCHKCPQLQYTGVQKPG) constitute a TB 1 domain. The N-linked (GlcNAc...) asparagine glycan is linked to asparagine 349. In terms of domain architecture, EGF-like 2; calcium-binding spans 355–395 (DINECAMPGVCRHGDCLNNPGSYRCVCPPGHSLGPSRTQCI). Cystine bridges form between cysteine 359-cysteine 370, cysteine 365-cysteine 379, cysteine 381-cysteine 394, cysteine 405-cysteine 428, cysteine 415-cysteine 440, cysteine 429-cysteine 443, and cysteine 430-cysteine 455. Residues 403-455 (SLCFRLVSPEHQCQHPLTTRLTRQLCCCSVGKAWGARCQRCPTDGTAAFKEIC) enclose the TB 2 domain. The tract at residues 478-552 (FSLFLHPDGP…ISRPSPPTMR (75 aa)) is disordered. Residues 529 to 540 (PTATTTPARPYP) are compositionally biased toward low complexity. The EGF-like 3 domain maps to 574-615 (ETDECRLNQNICGHGECVPGPPDYSCHCNPGYRSHPQHRYCV). Intrachain disulfides connect cysteine 578-cysteine 590, cysteine 585-cysteine 599, cysteine 601-cysteine 614, cysteine 620-cysteine 632, cysteine 625-cysteine 641, cysteine 664-cysteine 676, cysteine 670-cysteine 685, cysteine 687-cysteine 701, cysteine 748-cysteine 759, cysteine 754-cysteine 768, cysteine 770-cysteine 783, cysteine 789-cysteine 800, cysteine 795-cysteine 809, cysteine 811-cysteine 824, cysteine 830-cysteine 841, cysteine 836-cysteine 850, cysteine 852-cysteine 864, cysteine 870-cysteine 883, cysteine 877-cysteine 892, cysteine 894-cysteine 907, cysteine 919-cysteine 942, cysteine 929-cysteine 954, cysteine 943-cysteine 959, cysteine 944-cysteine 971, cysteine 997-cysteine 1010, cysteine 1005-cysteine 1019, cysteine 1021-cysteine 1034, cysteine 1040-cysteine 1051, cysteine 1046-cysteine 1060, cysteine 1062-cysteine 1075, cysteine 1086-cysteine 1097, cysteine 1092-cysteine 1106, cysteine 1108-cysteine 1121, cysteine 1138-cysteine 1162, cysteine 1148-cysteine 1174, cysteine 1163-cysteine 1177, and cysteine 1164-cysteine 1186. In terms of domain architecture, EGF-like 4; calcium-binding spans 616 to 659 (DVNECEAEPCGPGRGICMNTGGSYNCHCNRGYRLHVGAGGRSCV). Residues 660-702 (DLNECAKPHLCGDGGFCINFPGHYKCNCYPGYRLKASRPPVCE) form the EGF-like 5; calcium-binding domain. One can recognise an EGF-like 6; calcium-binding domain in the interval 744-784 (DVNECAEGSPCSPGWCENLPGSFRCTCAQGYAPAPDGRSCL). An EGF-like 7; calcium-binding domain is found at 785–825 (DVDECEAGDVCDNGICSNTPGSFQCQCLSGYHLSRDRSHCE). The 40-residue stretch at 826 to 865 (DIDECDFPAACIGGDCINTNGSYRCLCPQGHRLVGGRKCQ) folds into the EGF-like 8; calcium-binding domain. A glycan (N-linked (GlcNAc...) asparagine) is linked at asparagine 845. Residues 866–908 (DIDECSQDPSLCLPHGACKNLQGSYVCVCDEGFTPTQDQHGCE) form the EGF-like 9; calcium-binding domain. The TB 3 domain maps to 917–971 (KECYLNFDDTVFCDSVLATNVTQQECCCSLGAGWGDHCEIYPCPVYSSAEFHSLC). Residue asparagine 936 is glycosylated (N-linked (GlcNAc...) asparagine). In terms of domain architecture, EGF-like 10; calcium-binding spans 993–1035 (DIDECMLFGSEICKEGKCVNTQPGYECYCKQGFYYDGNLLECV). In terms of domain architecture, EGF-like 11; calcium-binding spans 1036–1076 (DVDECLDESNCRNGVCENTRGGYRCACTPPAEYSPAQRQCL). An EGF-like 12; calcium-binding domain is found at 1082 to 1122 (DVDECQDPAACRPGRCVNLPGSYRCECRPPWVPGPSGRDCQ). The TB 4 domain occupies 1136 to 1186 (DVCWSQRGEDGMCAGPLAGPALTFDDCCCRQGRGWGAQCRPCPPRGAGSHC). A compositionally biased stretch (polar residues) spans 1188–1198 (TSQSESNSFWD). Residues 1188-1219 (TSQSESNSFWDTSPLLLGKPPRDEDSSEEDSD) are disordered. Positions 1254-1298 (DIDECRELNQRGLLCKSERCVNTSGSFRCVCKAGFARSRPHGACV) constitute an EGF-like 13; calcium-binding domain. 2 cysteine pairs are disulfide-bonded: cysteine 1258–cysteine 1273 and cysteine 1268–cysteine 1282. N-linked (GlcNAc...) asparagine glycosylation occurs at asparagine 1275.

This sequence belongs to the LTBP family. As to quaternary structure, forms part of the large latent transforming growth factor beta precursor complex; removal is essential for activation of complex. Interacts with EFEMP2. In terms of processing, contains hydroxylated asparagine residues. Post-translationally, two intrachain disulfide bonds from the TB3 domain are rearranged upon TGFB1 binding, and form interchain bonds with TGFB1 propeptide, anchoring it to the extracellular matrix. Isoform 2: Expressed prominently in heart, skeletal muscle, prostate, testis, small intestine and ovary. Isoform 1: Strongly expressed in pancreas and liver.

It localises to the secreted. It is found in the extracellular space. Its subcellular location is the extracellular matrix. In terms of biological role, key regulator of transforming growth factor beta (TGFB1, TGFB2 and TGFB3) that controls TGF-beta activation by maintaining it in a latent state during storage in extracellular space. Associates specifically via disulfide bonds with the Latency-associated peptide (LAP), which is the regulatory chain of TGF-beta, and regulates integrin-dependent activation of TGF-beta. The polypeptide is Latent-transforming growth factor beta-binding protein 3 (LTBP3) (Homo sapiens (Human)).